The following is a 147-amino-acid chain: Histone-lysine N-methyltransferase, H3 lysine-37 specific (147 aa).

In terms of domain architecture, SET spans 8–116 (SPLEIRDTER…TNEELCISYG (109 aa)).

It belongs to the class V-like SAM-binding methyltransferase superfamily. As to quaternary structure, homodimer.

The protein localises to the cytoplasm. It is found in the nucleus. It carries out the reaction L-lysyl(37)-[histone H3] + S-adenosyl-L-methionine = N(6)-methyl-L-lysyl(37)-[histone H3] + S-adenosyl-L-homocysteine + H(+). The enzyme catalyses N(6)-methyl-L-lysyl(37)-[histone H3] + S-adenosyl-L-methionine = N(6),N(6)-dimethyl-L-lysyl(37)-[histone H3] + S-adenosyl-L-homocysteine + H(+). The catalysed reaction is N(6),N(6)-dimethyl-L-lysyl(37)-[histone H3] + S-adenosyl-L-methionine = N(6),N(6),N(6)-trimethyl-L-lysyl(37)-[histone H3] + S-adenosyl-L-homocysteine + H(+). Histone lysine methyltransferase that specifically mono-, di-, and trimethylates 'Lys-37' of histone H3 to regulate sporulation. The chain is Histone-lysine N-methyltransferase, H3 lysine-37 specific from Schizosaccharomyces pombe (strain 972 / ATCC 24843) (Fission yeast).